We begin with the raw amino-acid sequence, 137 residues long: Phosphoribosyl-AMP cyclohydrolase (137 aa).

D84 contacts Mg(2+). C85 is a binding site for Zn(2+). Positions 86 and 88 each coordinate Mg(2+). Zn(2+) is bound by residues C101 and C108.

Belongs to the PRA-CH family. Homodimer. Mg(2+) serves as cofactor. Zn(2+) is required as a cofactor.

The protein localises to the cytoplasm. It catalyses the reaction 1-(5-phospho-beta-D-ribosyl)-5'-AMP + H2O = 1-(5-phospho-beta-D-ribosyl)-5-[(5-phospho-beta-D-ribosylamino)methylideneamino]imidazole-4-carboxamide. It participates in amino-acid biosynthesis; L-histidine biosynthesis; L-histidine from 5-phospho-alpha-D-ribose 1-diphosphate: step 3/9. In terms of biological role, catalyzes the hydrolysis of the adenine ring of phosphoribosyl-AMP. The chain is Phosphoribosyl-AMP cyclohydrolase from Chlorobium chlorochromatii (strain CaD3).